The following is a 734-amino-acid chain: Photosystem I P700 chlorophyll a apoprotein A2 (734 aa).

8 helical membrane passes run 46–69, 135–158, 175–199, 273–291, 330–353, 369–395, 417–439, and 517–535; these read IFASHFGQLAIIFLWTSGNLFHVA, LYTGALFLLFLSAISLIAGWLHLQ, LNHHLSGLFGVSSLAWTGHLVHVAI, IAHHHLAIAFIFLVAGHMY, IHFQLGLALASLGVITSLVAQHMY, AALYTHHQYIAGFIMTGAFAHGAIFFI, AIISHLSWASLFLGFHTLGLYVH, and FLVHHAIALGLHTTTLILV. Residues Cys559 and Cys568 each contribute to the [4Fe-4S] cluster site. A run of 2 helical transmembrane segments spans residues 575-596 and 643-665; these read AFYLAVFWMLNTIGWVTFYWHW and LSVWAWMFLFGHLVWATGFMFLI. Residues His654, Met662, and Tyr670 each contribute to the chlorophyll a site. A phylloquinone-binding site is contributed by Trp671. The helical transmembrane segment at 707–727 threads the bilayer; sequence LVGLAHFSVGYIFTYAAFLIA.

This sequence belongs to the PsaA/PsaB family. As to quaternary structure, the PsaA/B heterodimer binds the P700 chlorophyll special pair and subsequent electron acceptors. PSI consists of a core antenna complex that captures photons, and an electron transfer chain that converts photonic excitation into a charge separation. The eukaryotic PSI reaction center is composed of at least 11 subunits. Requires P700 is a chlorophyll a/chlorophyll a' dimer, A0 is one or more chlorophyll a, A1 is one or both phylloquinones and FX is a shared 4Fe-4S iron-sulfur center. as cofactor.

It is found in the plastid. Its subcellular location is the chloroplast thylakoid membrane. It catalyses the reaction reduced [plastocyanin] + hnu + oxidized [2Fe-2S]-[ferredoxin] = oxidized [plastocyanin] + reduced [2Fe-2S]-[ferredoxin]. PsaA and PsaB bind P700, the primary electron donor of photosystem I (PSI), as well as the electron acceptors A0, A1 and FX. PSI is a plastocyanin-ferredoxin oxidoreductase, converting photonic excitation into a charge separation, which transfers an electron from the donor P700 chlorophyll pair to the spectroscopically characterized acceptors A0, A1, FX, FA and FB in turn. Oxidized P700 is reduced on the lumenal side of the thylakoid membrane by plastocyanin. This Eucalyptus globulus subsp. globulus (Tasmanian blue gum) protein is Photosystem I P700 chlorophyll a apoprotein A2.